The following is a 591-amino-acid chain: Aspartate--tRNA ligase (591 aa).

Residue E171 coordinates L-aspartate. An aspartate region spans residues 195-198 (QLFK). L-aspartate is bound at residue R217. ATP is bound by residues 217-219 (RDE) and Q226. H448 provides a ligand contact to L-aspartate. E482 contributes to the ATP binding site. Position 489 (R489) interacts with L-aspartate. Residue 534–537 (GLDR) coordinates ATP.

This sequence belongs to the class-II aminoacyl-tRNA synthetase family. Type 1 subfamily. In terms of assembly, homodimer.

The protein resides in the cytoplasm. The catalysed reaction is tRNA(Asp) + L-aspartate + ATP = L-aspartyl-tRNA(Asp) + AMP + diphosphate. Functionally, catalyzes the attachment of L-aspartate to tRNA(Asp) in a two-step reaction: L-aspartate is first activated by ATP to form Asp-AMP and then transferred to the acceptor end of tRNA(Asp). The polypeptide is Aspartate--tRNA ligase (Vibrio cholerae serotype O1 (strain ATCC 39541 / Classical Ogawa 395 / O395)).